Here is a 180-residue protein sequence, read N- to C-terminus: Inner membrane-spanning protein YciB (180 aa).

A run of 5 helical transmembrane segments spans residues isoleucine 22 to leucine 42, methionine 50 to serine 70, leucine 72 to serine 92, leucine 121 to leucine 141, and phenylalanine 149 to isoleucine 169.

The protein belongs to the YciB family.

Its subcellular location is the cell inner membrane. Functionally, plays a role in cell envelope biogenesis, maintenance of cell envelope integrity and membrane homeostasis. The sequence is that of Inner membrane-spanning protein YciB from Yersinia pseudotuberculosis serotype O:1b (strain IP 31758).